The chain runs to 21 residues: Azemiopsin (21 aa).

Over residues 1 to 14 (DNWWPKPPHQGPRP) the composition is skewed to pro residues. A disordered region spans residues 1–21 (DNWWPKPPHQGPRPPRPRPKP). Implicated in receptor binding regions lie at residues 3 to 6 (WWPK), 8 to 11 (PHQG), and 13 to 14 (RP).

As to quaternary structure, monomer. As to expression, expressed by the venom gland.

It is found in the secreted. In terms of biological role, in vitro, reversibly blocks human muscle-type nicotinic acetylcholine receptors (nAChR) alpha-1-beta-1-epsilon-delta/CHRNA1-CHRNB1-CHRNE-CHRND (EC(50)=0.44 uM) and alpha-1-beta-1-gamma-delta/CHRNA1-CHRNB1-CHRNG-CHRND (EC(50)=1.56 uM). Binds to nAChR from T.californica (IC(50)=0.03-0.18 uM), human neuronal nAChR alpha-7/CHRNA7 (IC(50)=22 uM) and acetylcholine-binding proteins (AChBP) from L.stagnalis (IC(50)=63 uM) and A.californica (IC(50)=230 uM). The polypeptide is Azemiopsin (Azemiops feae (Fea's viper)).